Consider the following 492-residue polypeptide: Lysine--tRNA ligase (492 aa).

Mg(2+) is bound by residues Glu-403 and Glu-410.

It belongs to the class-II aminoacyl-tRNA synthetase family. In terms of assembly, homodimer. Requires Mg(2+) as cofactor.

The protein resides in the cytoplasm. The enzyme catalyses tRNA(Lys) + L-lysine + ATP = L-lysyl-tRNA(Lys) + AMP + diphosphate. The chain is Lysine--tRNA ligase from Mycoplasmoides gallisepticum (strain R(low / passage 15 / clone 2)) (Mycoplasma gallisepticum).